The following is a 432-amino-acid chain: Putative D-alanyl-D-alanine carboxypeptidase (432 aa).

The chain crosses the membrane as a helical; Signal-anchor span at residues 7-25 (ATVLLTFSLSAFAVEYPVL).

Belongs to the peptidase S12 family. YfeW subfamily.

It localises to the cell inner membrane. It carries out the reaction Preferential cleavage: (Ac)2-L-Lys-D-Ala-|-D-Ala. Also transpeptidation of peptidyl-alanyl moieties that are N-acyl substituents of D-alanine.. This chain is Putative D-alanyl-D-alanine carboxypeptidase, found in Salmonella paratyphi A (strain ATCC 9150 / SARB42).